The following is a 288-amino-acid chain: Quinate/shikimate dehydrogenase (288 aa).

Substrate contacts are provided by Lys-71 and Asp-107. Residues 132–135, 155–158, Lys-205, 232–235, and Gly-255 contribute to the NAD(+) site; these read AGGA, NRRD, and CVYN.

It belongs to the shikimate dehydrogenase family. As to quaternary structure, homodimer.

It catalyses the reaction L-quinate + NAD(+) = 3-dehydroquinate + NADH + H(+). It carries out the reaction L-quinate + NADP(+) = 3-dehydroquinate + NADPH + H(+). The catalysed reaction is shikimate + NADP(+) = 3-dehydroshikimate + NADPH + H(+). The enzyme catalyses shikimate + NAD(+) = 3-dehydroshikimate + NADH + H(+). It participates in metabolic intermediate biosynthesis; chorismate biosynthesis; chorismate from D-erythrose 4-phosphate and phosphoenolpyruvate: step 4/7. Its function is as follows. The actual biological function of YdiB remains unclear, nor is it known whether 3-dehydroshikimate or quinate represents the natural substrate. Catalyzes the reversible NAD-dependent reduction of both 3-dehydroshikimate (DHSA) and 3-dehydroquinate to yield shikimate (SA) and quinate, respectively. It can use both NAD or NADP for catalysis, however it has higher catalytic efficiency with NAD. In Escherichia coli O139:H28 (strain E24377A / ETEC), this protein is Quinate/shikimate dehydrogenase.